A 548-amino-acid chain; its full sequence is Chaperonin GroEL 1 (548 aa).

Residues 30–33 (TLGP), Lys51, 87–91 (DGTTT), Gly415, 479–481 (NAA), and Asp495 each bind ATP.

Belongs to the chaperonin (HSP60) family. Forms a cylinder of 14 subunits composed of two heptameric rings stacked back-to-back. Interacts with the co-chaperonin GroES.

It localises to the cytoplasm. It catalyses the reaction ATP + H2O + a folded polypeptide = ADP + phosphate + an unfolded polypeptide.. Its function is as follows. Together with its co-chaperonin GroES, plays an essential role in assisting protein folding. The GroEL-GroES system forms a nano-cage that allows encapsulation of the non-native substrate proteins and provides a physical environment optimized to promote and accelerate protein folding. This chain is Chaperonin GroEL 1, found in Escherichia coli O1:K1 / APEC.